The primary structure comprises 404 residues: Alkane 1-monooxygenase 1 (404 aa).

4 helical membrane passes run 25–45 (HLWILSVLWPATPIIGLYLVS), 47–67 (TGWSIWYGLVLILWYGLVPLI), 94–114 (VLTYLTVPIHYAALIISAWWV), and 119–139 (IGVFEFLALALSLGIVNGLAL). Positions 143 and 147 each coordinate Fe cation. A helical membrane pass occupies residues 151-171 (TFDRWMAKLVLAVVGYGHFFI). His173, His177, and His178 together coordinate Fe cation. Residues 241 to 261 (VVLYAALLAFFGPLMLIFLPI) form a helical membrane-spanning segment. The Fe cation site is built by His317, His320, and His321.

It belongs to the fatty acid desaturase type 1 family. AlkB subfamily. It depends on Fe(3+) as a cofactor.

Its subcellular location is the cell inner membrane. The catalysed reaction is octane + 2 reduced [rubredoxin] + O2 + 2 H(+) = 2 oxidized [rubredoxin] + octan-1-ol + H2O. It participates in hydrocarbon metabolism; alkane degradation. Catalyzes the hydroxylation of n-alkanes and fatty acids in the presence of a NADH-rubredoxin reductase and rubredoxin. It preferably hydroxylases C5-C12 hydrocarbons. The chain is Alkane 1-monooxygenase 1 (alkB1) from Alcanivorax borkumensis (strain ATCC 700651 / DSM 11573 / NCIMB 13689 / SK2).